The chain runs to 170 residues: Lipoprotein signal peptidase (170 aa).

A run of 3 helical transmembrane segments spans residues 5 to 25 (IVGV…KAYA), 62 to 82 (SNLI…VLFV), and 89 to 111 (STIC…LRFG). Active-site residues include Asp-115 and Asp-133. A helical transmembrane segment spans residues 126–146 (WPAFNFADVCVTCGVICFLCL).

The protein belongs to the peptidase A8 family.

It is found in the cell inner membrane. It carries out the reaction Release of signal peptides from bacterial membrane prolipoproteins. Hydrolyzes -Xaa-Yaa-Zaa-|-(S,diacylglyceryl)Cys-, in which Xaa is hydrophobic (preferably Leu), and Yaa (Ala or Ser) and Zaa (Gly or Ala) have small, neutral side chains.. It functions in the pathway protein modification; lipoprotein biosynthesis (signal peptide cleavage). This protein specifically catalyzes the removal of signal peptides from prolipoproteins. This is Lipoprotein signal peptidase from Anaplasma marginale (strain Florida).